Reading from the N-terminus, the 91-residue chain is Thioredoxin (91 aa).

The Thioredoxin domain occupies 2 to 91 (SDSIVHVTDD…SRQSEVEATK (90 aa)). A disulfide bridge links cysteine 33 with cysteine 36.

This sequence belongs to the thioredoxin family.

Its function is as follows. Participates in various redox reactions through the reversible oxidation of its active center dithiol to a disulfide and catalyzes dithiol-disulfide exchange reactions. The protein is Thioredoxin (trxA) of Thiocapsa roseopersicina.